Here is a 487-residue protein sequence, read N- to C-terminus: Serine/threonine-protein phosphatase 2A activator 1 (487 aa).

Disordered regions lie at residues 1-28 (MPMI…SSST) and 426-487 (GGIQ…PKPE).

This sequence belongs to the PTPA-type PPIase family.

It is found in the cytoplasm. The protein resides in the nucleus. It catalyses the reaction [protein]-peptidylproline (omega=180) = [protein]-peptidylproline (omega=0). Its function is as follows. PPIases accelerate the folding of proteins. It catalyzes the cis-trans isomerization of proline imidic peptide bonds in oligopeptides. Acts as a regulatory subunit for PP2A-like phosphatases modulating their activity or substrate specificity, probably by inducing a conformational change in the catalytic subunit, a direct target of the PPIase. Can reactivate inactive phosphatase PP2A-phosphatase methylesterase complexes (PP2Ai) in presence of ATP and Mg(2+) by dissociating the inactive form from the complex. In Mycosarcoma maydis (Corn smut fungus), this protein is Serine/threonine-protein phosphatase 2A activator 1 (RRD1).